Reading from the N-terminus, the 352-residue chain is Staphylococcal superantigen-like 3 (352 aa).

Residues 1–30 (MKMRTIAKTSLALGLLTTGAITVTTQSVKA) form the signal peptide. The tract at residues 61-165 (ATTQAANTRQ…TIKQAQTDMT (105 aa)) is disordered. Residues 69-104 (RQERTPKLEKAPNTNEEKTSASKIEKISQPKQEEQK) are compositionally biased toward basic and acidic residues. A compositionally biased stretch (low complexity) spans 114–141 (PKQEQSQTTTESTTPKTKVTTPPSTNTP). Positions 142–164 (QPMQSTKSDTPQSPTIKQAQTDM) are enriched in polar residues. The sialyl Lewis X-binding stretch occupies residues 228 to 326 (IDVFIVLEDN…VIKMKNGGKY (99 aa)).

The protein belongs to the staphylococcal/streptococcal toxin family. As to quaternary structure, interacts with host TLR2 (via its extracellular domain).

The protein resides in the secreted. Functionally, secreted protein that plays an essential role in immune innate response inhibition by interacting with and inhibiting host TLR2. In turn, bacteria recognition by immune cells is impaired and cytokine production is inhibited. Mechanistically, by interacting with TLR2, blocks ligand binding and thus inhibits activation. Second, by interacting with an already formed TLR2-lipopeptide complex, prevents TLR heterodimerization and downstream signaling. The interaction with host TLR2 does not involve sialyl Lewis X interactions. The polypeptide is Staphylococcal superantigen-like 3 (Staphylococcus aureus (strain Newman)).